A 299-amino-acid chain; its full sequence is Non-structural protein NS-S (299 aa).

The involved in inclusion bodies formation stretch occupies residues 66–69 (PNNP). The interaction with host TNIP2 stretch occupies residues 148-220 (FEGDMVIDSC…KPLLDSLYFA (73 aa)).

This sequence belongs to the Bandavirus NS-S protein family. Interacts with host TBK1; this interaction antagonizes TBK1 phosphorylation and inhibits TBK1-IRF3 interaction. Interacts with host STAT2; this interaction blocks the nuclear translocation and activation of host STAT2. Interacts with host TNIP2.

It is found in the host cytoplasm. Plays a role in the inhibition of host RLR-induced interferon-beta activation by inhibiting the phosphorylation of TANK-binding kinase 1/TBK1, thereby blocking IRF3 activation and preventing the establishment of an antiviral state. Also blocks IFN-triggered nuclear translocation and activation of host STAT2. This chain is Non-structural protein NS-S (NSS), found in Alces americanus (American moose).